The chain runs to 316 residues: MSEKVNSDFEDFSSDEETDQHNVLIQTKKKISSKDDIFSKKVEDIESENESDIEEEQKQEEKEDVEQPDKENGEKLDREVEEQASSTTSLDLKTEKLRQLVKSKAAKKSKHKTGVVYFSSIPPYMKPAKMRQILTRFGEVDRLFLKKEDDQKYKQRVKGGGNKKNKYEEGWAEFIRKRDAKLCAETLNGNIIGGKKGTFYHDDILNVKYLPGFKWADLTEQIARENDIRQAKLEMEISQANKLNAEFIRNVEQSKMIQNIKNSRKRAGKEGESADSHPHREFKQRRVETSRANAPSDIKQQSSGSKDLGNVLTNLL.

Residues 1 to 91 (MSEKVNSDFE…EQASSTTSLD (91 aa)) form a disordered region. Phosphoserine occurs at positions 7, 13, and 14. The segment covering 8 to 18 (DFEDFSSDEET) has biased composition (acidic residues). The span at 32-44 (SSKDDIFSKKVED) shows a compositional bias: basic and acidic residues. Positions 45 to 58 (IESENESDIEEEQK) are enriched in acidic residues. Residues 59–78 (QEEKEDVEQPDKENGEKLDR) show a composition bias toward basic and acidic residues. One can recognise an RRM domain in the interval 114–204 (GVVYFSSIPP…KKGTFYHDDI (91 aa)). The interval 261-316 (KNSRKRAGKEGESADSHPHREFKQRRVETSRANAPSDIKQQSSGSKDLGNVLTNLL) is disordered. Basic and acidic residues predominate over residues 268–289 (GKEGESADSHPHREFKQRRVET). Over residues 290 to 316 (SRANAPSDIKQQSSGSKDLGNVLTNLL) the composition is skewed to polar residues.

It belongs to the ESF2/ABP1 family. In terms of assembly, component of the 90S pre-ribosomes. Interacts directly with DBP8.

The protein localises to the nucleus. It localises to the nucleolus. In terms of biological role, involved in the small subunit (SSU) processome assembly and function, and in the 18S rRNA synthesis. Required for the early cleavages at sites A0, A1 and A2. Stimulates DBP8 RNA helicase ATPase activity. In Saccharomyces cerevisiae (strain ATCC 204508 / S288c) (Baker's yeast), this protein is Pre-rRNA-processing protein ESF2 (ESF2).